Here is a 76-residue protein sequence, read N- to C-terminus: Conotoxin VnMEKL-021 (76 aa).

The N-terminal stretch at 1–19 (MQKLTILLLVAAVLMSTQA) is a signal peptide. The propeptide occupies 20-37 (LIKGGGEKRPKEKIKFLS). 3 disulfides stabilise this stretch: Cys51–Cys65, Cys58–Cys69, and Cys64–Cys73.

It belongs to the conotoxin O2 superfamily. In terms of tissue distribution, expressed by the venom duct.

It localises to the secreted. This Conus ventricosus (Mediterranean cone) protein is Conotoxin VnMEKL-021.